A 114-amino-acid chain; its full sequence is Probable 4-amino-4-deoxy-L-arabinose-phosphoundecaprenol flippase subunit ArnE (114 aa).

The next 3 helical transmembrane spans lie at 38–58 (LTLRWLAIAVVSLGLGMLLWL), 64–84 (LPLSVAYPMLSFNFVLVTLAA), and 94–114 (LRHWLGVAAIMFGILLMSWHL). The region spanning 43 to 112 (LAIAVVSLGL…IMFGILLMSW (70 aa)) is the EamA domain.

This sequence belongs to the ArnE family. In terms of assembly, heterodimer of ArnE and ArnF.

The protein resides in the cell inner membrane. The protein operates within bacterial outer membrane biogenesis; lipopolysaccharide biosynthesis. Functionally, translocates 4-amino-4-deoxy-L-arabinose-phosphoundecaprenol (alpha-L-Ara4N-phosphoundecaprenol) from the cytoplasmic to the periplasmic side of the inner membrane. In Yersinia pestis bv. Antiqua (strain Antiqua), this protein is Probable 4-amino-4-deoxy-L-arabinose-phosphoundecaprenol flippase subunit ArnE.